Here is a 685-residue protein sequence, read N- to C-terminus: Heat shock protein homolog SSE1 (685 aa).

Positions 651-685 (QALRSNQEASKMADLSAKLAAQRKAEAEAKENAKE) are disordered. Basic and acidic residues predominate over residues 673 to 685 (RKAEAEAKENAKE).

Belongs to the heat shock protein 70 family.

It is found in the cytoplasm. This is Heat shock protein homolog SSE1 (SSE1) from Naumovozyma castellii (Yeast).